An 88-amino-acid chain; its full sequence is Co-chaperonin GroES (88 aa).

It belongs to the GroES chaperonin family. As to quaternary structure, heptamer of 7 subunits arranged in a ring. Interacts with the chaperonin GroEL.

The protein resides in the cytoplasm. In terms of biological role, together with the chaperonin GroEL, plays an essential role in assisting protein folding. The GroEL-GroES system forms a nano-cage that allows encapsulation of the non-native substrate proteins and provides a physical environment optimized to promote and accelerate protein folding. GroES binds to the apical surface of the GroEL ring, thereby capping the opening of the GroEL channel. This is Co-chaperonin GroES from Treponema denticola (strain ATCC 35405 / DSM 14222 / CIP 103919 / JCM 8153 / KCTC 15104).